The chain runs to 2352 residues: Highly reducing polyketide synthase ZEA2 (2352 aa).

The region spanning 9-433 is the Ketosynthase family 3 (KS3) domain; the sequence is PGPVAIVGLA…GTNGHVVLEA (425 aa). Catalysis depends on for beta-ketoacyl synthase activity residues cysteine 181, histidine 316, and histidine 356. A malonyl-CoA:ACP transacylase (MAT) domain region spans residues 544 to 875; sequence FVFTGQGAQW…LATSLFLQGV (332 aa). Catalysis depends on serine 634, which acts as the For malonyltransferase activity. An N-terminal hotdog fold region spans residues 923-1058; it reads RSIIGAPVPK…GLITIDYEGN (136 aa). The region spanning 923–1242 is the PKS/mFAS DH domain; the sequence is RSIIGAPVPK…TSELEMDGAA (320 aa). Positions 925–1237 are dehydratase (DH) domain; that stretch reads IIGAPVPKMN…VIDFRTSELE (313 aa). Histidine 955 serves as the catalytic Proton acceptor; for dehydratase activity. The segment at 1086–1242 is C-terminal hotdog fold; it reads PATYAKDRFY…TSELEMDGAA (157 aa). Residue aspartate 1152 is the Proton donor; for dehydratase activity of the active site. The interval 1643 to 1955 is enoylreductase (ER) domain; it reads GLLDTLYFVD…QGKHRGKIVL (313 aa). Positions 1979-2159 are catalytic ketoreductase (KRc) domain; the sequence is ATYLFVGGLG…VSVNLGIMRD (181 aa). One can recognise a Carrier domain in the interval 2269–2346; the sequence is KATEIITNAL…SFAGKLASTS (78 aa). Serine 2306 is subject to O-(pantetheine 4'-phosphoryl)serine.

Its pathway is mycotoxin biosynthesis. Functionally, highly reducing polyketide synthase; part of the gene cluster that mediates the biosynthesis of zearalenone (ZEA), a nonsteroid estrogen that is a contaminant of cereal grains and causes estrogenic disorders in humans and animals. The ZEA backbone is synthesized from a single acetyl-CoA molecule and eight malonyl-CoA molecules. The reducing polyketide synthase ZEA2 is proposed to synthesize a reduced hexaketide intermediate by using different combinations of its reductive domains during each round of condensation. The hexaketide thioester is then transacylated to the non-reducing polyketide synthase ZEA1 and is further condensed with three malonyl-CoAs without reductive tailoring to yield a mixed reduced/unreduced nonaketide. ZEA1 must be able to interact with ZEA2 to facilitate starter-unit acyltransfer and initiate polyketide biosynthesis. ZEA1 also mediates the required C2-C7 cyclization to form the resorcylate core and catalyzes the formation of the macrolactone. ZEB1 is then responsible for the chemical conversion of beta-zearalenonol (beta-ZOL) to ZEA in the biosynthetic pathway. The polypeptide is Highly reducing polyketide synthase ZEA2 (Gibberella zeae (strain ATCC MYA-4620 / CBS 123657 / FGSC 9075 / NRRL 31084 / PH-1) (Wheat head blight fungus)).